The chain runs to 26 residues: DEAD-box ATP-dependent RNA helicase 1 (26 aa).

Positions 1–10 (RELLMGIFEK) match the Q motif motif. An ATP-binding site is contributed by 11 to 16 (NGTGKT). The region spanning 11 to 26 (NGTGKTAAFVIPLLQK) is the Helicase ATP-binding domain.

It belongs to the DEAD box helicase family. DDX6/DHH1 subfamily.

It localises to the cytoplasm. The protein localises to the P-body. It carries out the reaction ATP + H2O = ADP + phosphate + H(+). ATP-dependent RNA helicase involved in mRNA turnover, and more specifically in mRNA decapping. The protein is DEAD-box ATP-dependent RNA helicase 1 of Catharanthus roseus (Madagascar periwinkle).